A 380-amino-acid chain; its full sequence is tRNA-specific 2-thiouridylase MnmA (380 aa).

ATP contacts are provided by residues 9 to 16 (GVSGGVDS) and Met-35. Residues 94-96 (NPD) are interaction with target base in tRNA. Cys-99 serves as the catalytic Nucleophile. Residues Cys-99 and Cys-195 are joined by a disulfide bond. Gly-123 is a binding site for ATP. Residues 145–147 (KDQ) are interaction with tRNA. Cys-195 serves as the catalytic Cysteine persulfide intermediate. An interaction with tRNA region spans residues 308–309 (RY).

It belongs to the MnmA/TRMU family.

The protein localises to the cytoplasm. It catalyses the reaction S-sulfanyl-L-cysteinyl-[protein] + uridine(34) in tRNA + AH2 + ATP = 2-thiouridine(34) in tRNA + L-cysteinyl-[protein] + A + AMP + diphosphate + H(+). In terms of biological role, catalyzes the 2-thiolation of uridine at the wobble position (U34) of tRNA, leading to the formation of s(2)U34. The polypeptide is tRNA-specific 2-thiouridylase MnmA (Stenotrophomonas maltophilia (strain K279a)).